The primary structure comprises 116 residues: MRKVIHIGLPKLSEEELIEIGDIAQRVIIDYIFEHLAKSEVRDMEVTARINQGETLDLELEVYVEVPIFVRVDVESLIDEAIDKAYEVVERHLRKLAKGKGNEGREEAEEASGKSK.

A disordered region spans residues 97–116 (AKGKGNEGREEAEEASGKSK). Residues 100–116 (KGNEGREEAEEASGKSK) are compositionally biased toward basic and acidic residues.

It belongs to the UPF0440 family.

This is an uncharacterized protein from Pyrococcus horikoshii (strain ATCC 700860 / DSM 12428 / JCM 9974 / NBRC 100139 / OT-3).